The sequence spans 327 residues: Malate dehydrogenase (327 aa).

11-17 (GAAGNIS) contacts NAD(+). 2 residues coordinate substrate: Arg-92 and Arg-98. NAD(+) contacts are provided by residues Asn-105, Gln-112, and 129 to 131 (VGN). Substrate contacts are provided by Asn-131 and Arg-162. The active-site Proton acceptor is His-187. Residues 304 to 327 (SQEKMKATEQELSEERDAVEHLLP) form a disordered region.

This sequence belongs to the LDH/MDH superfamily. MDH type 2 family.

The enzyme catalyses (S)-malate + NAD(+) = oxaloacetate + NADH + H(+). Catalyzes the reversible oxidation of malate to oxaloacetate. The chain is Malate dehydrogenase from Psychrobacter sp. (strain PRwf-1).